Here is a 390-residue protein sequence, read N- to C-terminus: GTPase Obg (390 aa).

Residues 1–159 form the Obg domain; that stretch reads MKFVDEASIL…RELLLELMLL (159 aa). Residues 127–147 are disordered; it reads NTRFKSSVNRTPRQKTNGTPG. Residues 129 to 145 show a composition bias toward polar residues; sequence RFKSSVNRTPRQKTNGT. In terms of domain architecture, OBG-type G spans 160–333; sequence ADVGMLGMPN…LCWDVMTFII (174 aa). GTP-binding positions include 166–173, 191–195, 213–216, 283–286, and 314–316; these read GMPNAGKS, FTTLV, DIPG, NKID, and SAA. Residues Ser-173 and Thr-193 each contribute to the Mg(2+) site.

The protein belongs to the TRAFAC class OBG-HflX-like GTPase superfamily. OBG GTPase family. In terms of assembly, monomer. Mg(2+) is required as a cofactor.

The protein resides in the cytoplasm. An essential GTPase which binds GTP, GDP and possibly (p)ppGpp with moderate affinity, with high nucleotide exchange rates and a fairly low GTP hydrolysis rate. Plays a role in control of the cell cycle, stress response, ribosome biogenesis and in those bacteria that undergo differentiation, in morphogenesis control. This chain is GTPase Obg, found in Escherichia coli O7:K1 (strain IAI39 / ExPEC).